A 442-amino-acid chain; its full sequence is NALCN channel auxiliary factor 2 (442 aa).

The helical transmembrane segment at 42 to 62 (LASLLFFTVLLSNHLWLVSAG) threads the bilayer. Residues N77, N100, N171, N279, and N354 are each glycosylated (N-linked (GlcNAc...) asparagine). A helical transmembrane segment spans residues 406 to 426 (CVLVLMLLHTMASFSVVQNGV).

It belongs to the NALF family.

Its subcellular location is the membrane. Functionally, probable component of the NALCN channel complex, a channel that regulates the resting membrane potential and controls neuronal excitability. This is NALCN channel auxiliary factor 2 (nalf2) from Xenopus tropicalis (Western clawed frog).